Consider the following 592-residue polypeptide: Aspartate--tRNA(Asp/Asn) ligase (592 aa).

L-aspartate is bound at residue glutamate 182. Residues 206–209 are aspartate; that stretch reads QIFK. Arginine 228 serves as a coordination point for L-aspartate. ATP contacts are provided by residues 228-230 and glutamine 237; that span reads RDE. Histidine 455 contributes to the L-aspartate binding site. Glutamate 489 is an ATP binding site. Arginine 496 contributes to the L-aspartate binding site. 541–544 contacts ATP; sequence GLDR.

This sequence belongs to the class-II aminoacyl-tRNA synthetase family. Type 1 subfamily. Homodimer.

Its subcellular location is the cytoplasm. It catalyses the reaction tRNA(Asx) + L-aspartate + ATP = L-aspartyl-tRNA(Asx) + AMP + diphosphate. Its function is as follows. Aspartyl-tRNA synthetase with relaxed tRNA specificity since it is able to aspartylate not only its cognate tRNA(Asp) but also tRNA(Asn). Reaction proceeds in two steps: L-aspartate is first activated by ATP to form Asp-AMP and then transferred to the acceptor end of tRNA(Asp/Asn). This chain is Aspartate--tRNA(Asp/Asn) ligase, found in Caldanaerobacter subterraneus subsp. tengcongensis (strain DSM 15242 / JCM 11007 / NBRC 100824 / MB4) (Thermoanaerobacter tengcongensis).